The sequence spans 284 residues: Tropomyosin isoforms a/b/d/f (284 aa).

A coiled-coil region spans residues 1 to 284; the sequence is MDAIKKKMQA…DSTFQELSGY (284 aa). The interval 40–78 is disordered; it reads EEELRDTQKKMTQTGDDLDKAQEDLSAATSKLEEKEKTV.

This sequence belongs to the tropomyosin family. In terms of tissue distribution, isoform a and isoform d are expressed in body wall muscles, vulva, anus muscles and male tail muscles. Located to the myofibrils of thin actin filaments.

The protein resides in the cytoplasm. Its subcellular location is the myofibril. It localises to the sarcomere. The protein localises to the i band. In terms of biological role, tropomyosin, in association with the troponin complex, plays a central role in the calcium dependent regulation of muscle contraction. Involved in muscle actin filament organization and muscle arm extension and morphology. Protects actin filaments from depolymerization by unc-60 in vitro. Also has a role in male mating behavior by regulating the copulatory spicules. Binds to F-actin. The sequence is that of Tropomyosin isoforms a/b/d/f (lev-11) from Caenorhabditis elegans.